The chain runs to 437 residues: Glutamate-1-semialdehyde 2,1-aminomutase (437 aa).

N6-(pyridoxal phosphate)lysine is present on Lys-273.

This sequence belongs to the class-III pyridoxal-phosphate-dependent aminotransferase family. HemL subfamily. As to quaternary structure, homodimer. The cofactor is pyridoxal 5'-phosphate.

Its subcellular location is the cytoplasm. The catalysed reaction is (S)-4-amino-5-oxopentanoate = 5-aminolevulinate. Its pathway is porphyrin-containing compound metabolism; protoporphyrin-IX biosynthesis; 5-aminolevulinate from L-glutamyl-tRNA(Glu): step 2/2. The sequence is that of Glutamate-1-semialdehyde 2,1-aminomutase from Chlamydia abortus (strain DSM 27085 / S26/3) (Chlamydophila abortus).